Consider the following 557-residue polypeptide: Potassium-transporting ATPase potassium-binding subunit (557 aa).

The next 10 membrane-spanning stretches (helical) occupy residues 4–24 (LGAG…VHVP), 61–81 (TYAL…YAFL), 131–151 (GLTV…VALV), 174–194 (LRVL…TGVV), 253–273 (LEVF…GTLV), 280–300 (LAVL…TTWA), 375–395 (GLYG…LMVG), 412–432 (CAAL…AVAL), 483–503 (LAIW…AGAF), and 528–548 (LAVV…LGPI).

The protein belongs to the KdpA family. As to quaternary structure, the system is composed of three essential subunits: KdpA, KdpB and KdpC.

The protein resides in the cell membrane. In terms of biological role, part of the high-affinity ATP-driven potassium transport (or Kdp) system, which catalyzes the hydrolysis of ATP coupled with the electrogenic transport of potassium into the cytoplasm. This subunit binds the extracellular potassium ions and delivers the ions to the membrane domain of KdpB through an intramembrane tunnel. The protein is Potassium-transporting ATPase potassium-binding subunit of Kineococcus radiotolerans (strain ATCC BAA-149 / DSM 14245 / SRS30216).